The following is a 3014-amino-acid chain: Genome polyprotein (3014 aa).

An N-acetylserine; by host modification is found at S2. Positions S2 to K23 are interaction with STAT1. Residues S2 to P58 form an interaction with EIF2AK2/PKR region. The tract at residues S2–R59 is interaction with DDX3X. Residues S2–S75 form a disordered region. The Cytoplasmic segment spans residues S2–N168. 2 short sequence motifs (nuclear localization signal) span residues P5 to R13 and P38 to R43. Over residues P7–N16 the composition is skewed to basic residues. Residues G32–R47 are compositionally biased toward low complexity. At S53 the chain carries Phosphoserine; by host. 2 consecutive short sequence motifs (nuclear localization signal) follow at residues P58 to P64 and P66 to P71. Residues S99 and S116 each carry the phosphoserine; by host modification. An important for endoplasmic reticulum and mitochondrial localization region spans residues P112 to A152. Residues V122–S173 form an interaction with APOA2 region. The segment at Y164–G167 is important for lipid droplets localization. The chain crosses the membrane as a helical span at residues L169–T189. A propeptide spans I178 to A191 (ER anchor for the core protein, removed in mature form by host signal peptidase). Over S190–A358 the chain is Lumenal. N-linked (GlcNAc...) asparagine; by host glycosylation is found at N196, N209, and N234. The tract at residues L265–R296 is important for fusion. N-linked (GlcNAc...) asparagine; by host glycosylation occurs at N305. A helical membrane pass occupies residues A359–A379. At G380 to L726 the chain is on the lumenal side. The HVR1 stretch occupies residues T385–Q412. Residues N417, N423, and N430 are each glycosylated (N-linked (GlcNAc...) (high mannose) asparagine; by host). Disulfide bonds link C429–C553, C452–C459, C487–C495, and C504–C509. N448 carries an N-linked (GlcNAc...) asparagine; by host glycan. Residues A475–G479 are HVR2. The CD81-binding 1 stretch occupies residues S481–P494. N533 is a glycosylation site (N-linked (GlcNAc...) asparagine; by host). Residues P545 to G552 are CD81-binding 2. The N-linked (GlcNAc...) asparagine; by host glycan is linked to N557. A disulfide bond links C565 and C570. A glycan (N-linked (GlcNAc...) asparagine; by host) is linked at N578. Intrachain disulfides connect C582–C586, C598–C621, and C608–C645. N-linked (GlcNAc...) (high mannose) asparagine; by host glycans are attached at residues N624 and N646. An intrachain disulfide couples C653 to C678. Positions A661 to Q672 are PKR/eIF2-alpha phosphorylation homology domain (PePHD). Residues L727 to A747 form a helical membrane-spanning segment. Residues A748–A758 are Lumenal-facing. A helical transmembrane segment spans residues A759 to F779. Residues K780 to L783 lie on the Cytoplasmic side of the membrane. A helical transmembrane segment spans residues V784–L804. Residues P805–S814 are Lumenal-facing. The chain crosses the membrane as a helical span at residues D815–G835. Residues Y836–H882 lie on the Cytoplasmic side of the membrane. A helical transmembrane segment spans residues P883–L903. Residues Q904–L929 lie on the Lumenal side of the membrane. One can recognise a Peptidase C18 domain in the interval Q904–L1027. The tract at residues Y905–R1207 is protease NS2-3. C923 is lipidated: S-palmitoyl cysteine; by host. A helical membrane pass occupies residues A930–I950. The interval A930 to I950 is interaction with host SCPS1. The Cytoplasmic portion of the chain corresponds to Y951–T1658. Active-site for protease NS2 activity; shared with dimeric partner residues include H953, E973, and C994. The Peptidase S29 domain maps to A1028 to P1209. Catalysis depends on charge relay system; for serine protease NS3 activity residues H1084 and D1108. Residues C1124 and C1126 each contribute to the Zn(2+) site. The active-site Charge relay system; for serine protease NS3 activity is S1166. The Zn(2+) site is built by C1172 and H1176. In terms of domain architecture, Helicase ATP-binding spans P1218–S1370. A1231 to S1238 is an ATP binding site. Residues S1238 and E1318 each contribute to the Mg(2+) site. The DECH box motif lies at D1317–H1320. The segment at Q1487–I1499 is RNA-binding. Residues S1659 to G1679 form a helical membrane-spanning segment. Positions S1680 to G1691 are NS3-binding. At S1680 to Q1806 the chain is on the cytoplasmic side. A helical transmembrane segment spans residues T1807–A1827. Over T1828–A1829 the chain is Lumenal. The helical transmembrane segment at F1830–I1850 threads the bilayer. Residue D1851 is a topological domain, cytoplasmic. A helical membrane pass occupies residues I1852–G1872. Over E1873 to N1882 the chain is Lumenal. Residues L1883–L1903 traverse the membrane as a helical segment. Over R1904 to C1973 the chain is Cytoplasmic. Residue C1973 is the site of S-palmitoyl cysteine; by host attachment. The stretch at D1974–Q2003 is an intramembrane region. Residues L2004–R2993 are Cytoplasmic-facing. Zn(2+)-binding residues include C2012, C2030, C2032, and C2053. The FKBP8-binding stretch occupies residues E2121–A2209. The tract at residues E2121–P2334 is transcriptional activation. Residues P2136–P2140 form an interaction with non-structural protein 4A region. Disordered regions lie at residues A2187–Q2219, T2301–L2337, and T2358–T2413. The interaction with host SKP2 stretch occupies residues R2190–E2441. Residues S2195, S2198, S2202, S2205, S2208, and S2211 each carry the phosphoserine; by host modification. The segment covering S2195–L2212 has biased composition (low complexity). The segment at S2211–K2250 is ISDR. The tract at residues S2211 to F2276 is interaction with EIF2AK2/PKR. The NS4B-binding stretch occupies residues K2250–Y2307. Residues E2300–P2378 are V3. Residues P2316–P2327 show a composition bias toward pro residues. Positions P2323–P2326 match the SH3-binding motif. Residues P2328–L2337 carry the Nuclear localization signal motif. A compositionally biased stretch (polar residues) spans T2358–D2375. Phosphoserine; by host is present on S2465. Residues P2637 to D2755 form the RdRp catalytic domain. Residues D2643, D2741, and D2742 each coordinate Mg(2+). Residues C2994–R3014 traverse the membrane as a helical segment.

This sequence belongs to the hepacivirus polyprotein family. In terms of assembly, homooligomer. Interacts with E1 (via C-terminus). Interacts with the non-structural protein 5A. Interacts (via N-terminus) with host STAT1 (via SH2 domain); this interaction results in decreased STAT1 phosphorylation and ubiquitin-mediated proteasome-dependent STAT1 degradation, leading to decreased IFN-stimulated gene transcription. Interacts with host STAT3; this interaction constitutively activates STAT3. Interacts with host LTBR receptor. Interacts with host TNFRSF1A receptor and possibly induces apoptosis. Interacts with host HNRPK. Interacts with host YWHAE. Interacts with host UBE3A/E6AP. Interacts with host DDX3X. Interacts with host APOA2. Interacts with host RXRA protein. Interacts with host SP110 isoform 3/Sp110b; this interaction sequesters the transcriptional corepressor SP110 away from the nucleus. Interacts with host CREB3 nuclear transcription protein; this interaction triggers cell transformation. Interacts with host ACY3. Interacts with host C1QR1. Interacts with host RBM24; this interaction, which enhances the interaction of the mature core protein with 5'-UTR, may inhibit viral translation and favor replication. Interacts with host EIF2AK2/PKR; this interaction induces the autophosphorylation of EIF2AK2. Part of the viral assembly initiation complex composed of NS2, E1, E2, NS3, NS4A, NS5A and the mature core protein. Forms a heterodimer with envelope glycoprotein E2. Interacts with mature core protein. Interacts with protease NS2. The heterodimer E1/E2 interacts with host CLDN1; this interaction plays a role in viral entry into host cell. Interacts with host SPSB2 (via C-terminus). Part of the viral assembly initiation complex composed of NS2, E1, E2, NS3, NS4A, NS5A and the mature core protein. Interacts with host NEURL3; this interaction prevents E1 binding to glycoprotein E2. As to quaternary structure, forms a heterodimer with envelope glycoprotein E1. Interacts with host CD81 and SCARB1 receptors; these interactions play a role in viral entry into host cell. Interacts with host EIF2AK2/PKR; this interaction inhibits EIF2AK2 and probably allows the virus to evade the innate immune response. Interacts with host CD209/DC-SIGN and CLEC4M/DC-SIGNR. Interact with host SPCS1; this interaction is essential for viral particle assembly. Interacts with protease NS2. The heterodimer E1/E2 interacts with host CLDN1; this interaction plays a role in viral entry into host cell. Part of the viral assembly initiation complex composed of NS2, E1, E2, NS3, NS4A, NS5A and the mature core protein. Interacts with host SLC3A2/4F2hc; the interaction may facilitate viral entry into host cell. Interacts with human PLSCR1. In terms of assembly, homohexamer. Homoheptamer. Interacts with protease NS2. Homodimer. Interacts with host SPCS1; this interaction is essential for viral particle assembly. Interacts with envelope glycoprotein E1. Interacts with envelope glycoprotein E2. Interacts with viroporin p7. Interacts with serine protease/helicase NS3. Part of the replication complex composed of NS2, NS3, NS4A, NS4B, NS5A and the RNA-directed RNA polymerase embedded in an ER-derived membranous web. Part of the viral assembly initiation complex composed of NS2, E1, E2, NS3, NS4A, NS5A and the mature core protein. As to quaternary structure, interacts with protease NS2. Interacts with non-structural protein 4A; this interaction stabilizes the folding of NS3 serine protease. NS3-NS4A interaction is essential for NS3 activation and allows membrane anchorage of the latter. NS3/NS4A complex also prevents phosphorylation of host IRF3, thus preventing the establishment of dsRNA induced antiviral state. Interacts with host MAVS; this interaction leads to the cleavage and inhibition of host MAVS. Interacts with host TICAM1; this interaction leads to the cleavage and inhibition of host TICAM1. Interacts with host TANK-binding kinase/TBK1; this interaction results in the inhibition of the association between TBK1 and IRF3, which leads to the inhibition of IRF3 activation. Interacts with host RBM24. Part of the replication complex composed of NS2, NS3, NS4A, NS4B, NS5A and the RNA-directed RNA polymerase embedded in an ER-derived membranous web. Part of the viral assembly initiation complex composed of NS2, E1, E2, NS3, NS4A, NS5A and the mature core protein. In terms of assembly, interacts with NS3 serine protease; this interaction stabilizes the folding of NS3 serine protease. NS3-NS4A interaction is essential for NS3 activation and allows membrane anchorage of the latter. Interacts with non-structural protein 5A (via N-terminus). Part of the replication complex composed of NS2, NS3, NS4A, NS4B, NS5A and the RNA-directed RNA polymerase embedded in an ER-derived membranous web. Part of the viral assembly initiation complex composed of NS2, E1, E2, NS3, NS4A, NS5A and the mature core protein. Homomultimer. Interacts with non-structural protein NS5A. Interacts with host PLA2G4C; this interaction likely initiates the recruitment of replication complexes to lipid droplets. Interacts with host STING; this interaction disrupts the interaction between STING and TBK1 thereby suppressing the interferon signaling. Part of the replication complex composed of NS2, NS3, NS4A, NS4B, NS5A and the RNA-directed RNA polymerase embedded in an ER-derived membranous web. As to quaternary structure, monomer. Homodimer; dimerization is required for RNA-binding. Interacts with the mature core protein. Interacts (via N-terminus) with non-structural protein 4A. Interacts with non-structural protein 4B. Interacts (via region D2) with RNA-directed RNA polymerase. Part of the viral assembly initiation complex composed of NS2, E1, E2, NS3, NS4A, NS5A and the mature core protein. Part of the replication complex composed of NS2, NS3, NS4A, NS4B, NS5A and the RNA-directed RNA polymerase embedded in an ER-derived membranous web. Interacts with host GRB2. Interacts with host BIN1. Interacts with host PIK3R1. Interacts with host SRCAP. Interacts with host FKBP8. Interacts (via C-terminus) with host VAPB (via MSP domain). Interacts with host EIF2AK2/PKR; this interaction leads to disruption of EIF2AK2 dimerization by NS5A and probably allows the virus to evade the innate immune response. Interacts (via N-terminus) with host PACSIN2 (via N-terminus); this interaction attenuates protein kinase C alpha-mediated phosphorylation of PACSIN2 by disrupting the interaction between PACSIN2 and PRKCA. Interacts (via N-terminus) with host SRC kinase (via SH2 domain). Interacts with most Src-family kinases. Interacts with host IFI27 and SKP2; promotes the ubiquitin-mediated proteasomal degradation of NS5A. Interacts with host GPS2. Interacts with host TNFRSF21; this interaction allows the modulation by the virus of JNK, p38 MAPK, STAT3, and Akt signaling pathways in a DR6-dependent manner. Interacts (via N-terminus) with host CIDEB (via N-terminus); this interaction seems to regulate the association of HCV particles with APOE. Interacts with host CHKA/Choline Kinase-alpha; CHKA bridges host PI4KA and NS5A and potentiates NS5A-stimulated PI4KA activity, which then facilitates the targeting of the ternary complex to the ER for viral replication. Interacts with host SPSB2 (via C-terminus); this interaction targets NS5A for ubiquitination and degradation. Interacts with host RAB18; this interaction may promote the association of NS5A and other replicase components with lipid droplets. Interacts (via region D2) with host PPIA/CYPA; the interaction stimulates RNA-binding ability of NS5A and is dependent on the peptidyl-prolyl cis-trans isomerase activity of PPIA/CYPA. Interacts with host TRIM14; this interaction induces the degradation of NS5A. In terms of assembly, homooligomer. Interacts with non-structural protein 5A. Interacts with host VAPB. Interacts with host PRK2/PKN2. Interacts with host HNRNPA1 and SEPT6; these interactions facilitate viral replication. Part of the replication complex composed of NS2, NS3, NS4A, NS4B, NS5A and the RNA-directed RNA polymerase. Zn(2+) serves as cofactor. Mg(2+) is required as a cofactor. In terms of processing, specific enzymatic cleavages in vivo yield mature proteins. The structural proteins, core, E1, E2 and p7 are produced by proteolytic processing by host signal peptidases. The core protein precursor is synthesized as a 23 kDa, which is retained in the ER membrane through the hydrophobic signal peptide. Cleavage by the signal peptidase releases the 21 kDa mature core protein. The cleavage of the core protein precursor occurs between aminoacids 176 and 188 but the exact cleavage site is not known. Some degraded forms of the core protein appear as well during the course of infection. The other proteins (p7, NS2, NS3, NS4A, NS4B, NS5A and NS5B) are cleaved by the viral proteases. Autoprocessing between NS2 and NS3 is mediated by the NS2 cysteine protease catalytic domain and regulated by the NS3 N-terminal domain. Phosphorylated by host PKC and PKA. Post-translationally, ubiquitinated; mediated by UBE3A and leading to core protein subsequent proteasomal degradation. In terms of processing, highly N-glycosylated. Palmitoylation is required for NS2/3 autoprocessing and E2 recruitment to membranes. Post-translationally, palmitoylated. This modification may play a role in its polymerization or in protein-protein interactions. In terms of processing, phosphorylated on serines in a basal form termed p56. p58 is a hyperphosphorylated form of p56. p56 and p58 coexist in the cell in roughly equivalent amounts. Hyperphosphorylation is dependent on the presence of NS4A. Host CSNK1A1/CKI-alpha or RPS6KB1 kinases may be responsible for NS5A phosphorylation. Tyrosine phosphorylation is essential for the interaction with host SRC. Post-translationally, the N-terminus is phosphorylated by host PRK2/PKN2.

Its subcellular location is the host endoplasmic reticulum membrane. The protein localises to the host mitochondrion membrane. It is found in the virion. It localises to the host cytoplasm. The protein resides in the host nucleus. Its subcellular location is the host lipid droplet. The protein localises to the virion membrane. It is found in the host mitochondrion. It localises to the host cell membrane. The protein resides in the host perinuclear region. The catalysed reaction is Hydrolysis of four peptide bonds in the viral precursor polyprotein, commonly with Asp or Glu in the P6 position, Cys or Thr in P1 and Ser or Ala in P1'.. The enzyme catalyses a ribonucleoside 5'-triphosphate + H2O = a ribonucleoside 5'-diphosphate + phosphate + H(+). It carries out the reaction ATP + H2O = ADP + phosphate + H(+). It catalyses the reaction RNA(n) + a ribonucleoside 5'-triphosphate = RNA(n+1) + diphosphate. Inhibited by the antiviral drug hexamethylene amiloride. Inhibition by amantadine appears to be genotype-dependent. Also inhibited by long-alkyl-chain iminosugar derivatives. With respect to regulation, activity is up-regulated by PRK2/PKN2-mediated phosphorylation. In terms of biological role, packages viral RNA to form a viral nucleocapsid, and promotes virion budding. Participates in the viral particle production as a result of its interaction with the non-structural protein 5A. Binds RNA and may function as a RNA chaperone to induce the RNA structural rearrangements taking place during virus replication. Modulates viral translation initiation by interacting with viral IRES and 40S ribosomal subunit. Affects various cell signaling pathways, host immunity and lipid metabolism. Prevents the establishment of cellular antiviral state by blocking the interferon-alpha/beta (IFN-alpha/beta) and IFN-gamma signaling pathways and by blocking the formation of phosphorylated STAT1 and promoting ubiquitin-mediated proteasome-dependent degradation of STAT1. Activates STAT3 leading to cellular transformation. Regulates the activity of cellular genes, including c-myc and c-fos. May repress the promoter of p53, and sequester CREB3 and SP110 isoform 3/Sp110b in the cytoplasm. Represses cell cycle negative regulating factor CDKN1A, thereby interrupting an important check point of normal cell cycle regulation. Targets transcription factors involved in the regulation of inflammatory responses and in the immune response: suppresses TNF-induced NF-kappa-B activation, and activates AP-1. Binds to dendritic cells (DCs) via C1QR1, resulting in down-regulation of T-lymphocytes proliferation. Alters lipid metabolism by interacting with hepatocellular proteins involved in lipid accumulation and storage. Induces up-regulation of FAS promoter activity, and thereby contributes to the increased triglyceride accumulation in hepatocytes (steatosis). Functionally, forms a heterodimer with envelope glycoprotein E2, which mediates virus attachment to the host cell, virion internalization through clathrin-dependent endocytosis and fusion with host membrane. Fusion with the host cell is most likely mediated by both E1 and E2, through conformational rearrangements of the heterodimer required for fusion rather than a classical class II fusion mechanism. E1/E2 heterodimer binds host apolipoproteins such as APOB and ApoE thereby forming a lipo-viro-particle (LVP). APOE associated to the LVP allows the initial virus attachment to cell surface receptors such as the heparan sulfate proteoglycans (HSPGs), syndecan-1 (SDC1), syndecan-1 (SDC2), the low-density lipoprotein receptor (LDLR) and scavenger receptor class B type I (SCARB1). The cholesterol transfer activity of SCARB1 allows E2 exposure and binding of E2 to SCARB1 and the tetraspanin CD81. E1/E2 heterodimer binding on CD81 activates the epithelial growth factor receptor (EGFR) signaling pathway. Diffusion of the complex E1-E2-EGFR-SCARB1-CD81 to the cell lateral membrane allows further interaction with Claudin 1 (CLDN1) and occludin (OCLN) to finally trigger HCV entry. Its function is as follows. Forms a heterodimer with envelope glycoprotein E1, which mediates virus attachment to the host cell, virion internalization through clathrin-dependent endocytosis and fusion with host membrane. Fusion with the host cell is most likely mediated by both E1 and E2, through conformational rearrangements of the heterodimer required for fusion rather than a classical class II fusion mechanism. The interaction between envelope glycoprotein E2 and host apolipoprotein E/APOE allows the proper assembly, maturation and infectivity of the viral particles. This interaction is probably promoted via the up-regulation of cellular autophagy by the virus. E1/E2 heterodimer binds host apolipoproteins such as APOB and APOE thereby forming a lipo-viro-particle (LVP). APOE associated to the LVP allows the initial virus attachment to cell surface receptors such as the heparan sulfate proteoglycans (HSPGs), syndecan-1 (SDC1), syndecan-1 (SDC2), the low-density lipoprotein receptor (LDLR) and scavenger receptor class B type I (SCARB1). The cholesterol transfer activity of SCARB1 allows E2 exposure and binding of E2 to SCARB1 and the tetraspanin CD81. E1/E2 heterodimer binding on CD81 activates the epithelial growth factor receptor (EGFR) signaling pathway. Diffusion of the complex E1-E2-EGFR-SCARB1-CD81 to the cell lateral membrane allows further interaction with Claudin 1 (CLDN1) and occludin (OCLN) to finally trigger HCV entry. Inhibits host EIF2AK2/PKR activation, preventing the establishment of an antiviral state. Viral ligand for CD209/DC-SIGN and CLEC4M/DC-SIGNR, which are respectively found on dendritic cells (DCs), and on liver sinusoidal endothelial cells and macrophage-like cells of lymph node sinuses. These interactions allow the capture of circulating HCV particles by these cells and subsequent facilitated transmission to permissive cells such as hepatocytes and lymphocyte subpopulations. The interaction between E2 and host amino acid transporter complex formed by SLC3A2 and SLC7A5/LAT1 may facilitate viral entry into host cell. Ion channel protein that acts as a viroporin and plays an essential role in the assembly, envelopment and secretion of viral particles. Regulates the host cell secretory pathway, which induces the intracellular retention of viral glycoproteins and favors assembly of viral particles. Creates a pore in acidic organelles and releases Ca(2+) and H(+) in the cytoplasm of infected cells, leading to a productive viral infection. High levels of cytoplasmic Ca(2+) may trigger membrane trafficking and transport of viral ER-associated proteins to viroplasms, sites of viral genome replication. This ionic imbalance induces the assembly of the inflammasome complex, which triggers the maturation of pro-IL-1beta into IL-1beta through the action of caspase-1. Targets also host mitochondria and induces mitochondrial depolarization. In addition of its role as a viroporin, acts as a lipid raft adhesion factor. In terms of biological role, cysteine protease required for the proteolytic auto-cleavage between the non-structural proteins NS2 and NS3. The N-terminus of NS3 is required for the function of NS2 protease (active region NS2-3). Promotes the initiation of viral particle assembly by mediating the interaction between structural and non-structural proteins. Functionally, displays three enzymatic activities: serine protease with a chymotrypsin-like fold, NTPase and RNA helicase. NS3 serine protease, in association with NS4A, is responsible for the cleavages of NS3-NS4A, NS4A-NS4B, NS4B-NS5A and NS5A-NS5B. The NS3/NS4A complex prevents phosphorylation of host IRF3, thus preventing the establishment of dsRNA induced antiviral state. The NS3/NS4A complex induces host amino acid transporter component SLC3A2, thus contributing to HCV propagation. NS3 RNA helicase binds to RNA and unwinds both dsDNA and dsRNA in the 3' to 5' direction, and likely resolves RNA complicated stable secondary structures in the template strand. Binds a single ATP and catalyzes the unzipping of a single base pair of dsRNA. Inhibits host antiviral proteins TBK1 and IRF3 thereby preventing the establishment of an antiviral state. Cleaves host MAVS/CARDIF thereby preventing the establishment of an antiviral state. Cleaves host TICAM1/TRIF, thereby disrupting TLR3 signaling and preventing the establishment of an antiviral state. Its function is as follows. Peptide cofactor which forms a non-covalent complex with the N-terminal of NS3 serine protease. The NS3/NS4A complex prevents phosphorylation of host IRF3, thus preventing the establishment of dsRNA induced antiviral state. The NS3/NS4A complex induces host amino acid transporter component SLC3A2, thus contributing to HCV propagation. Induces a specific membrane alteration that serves as a scaffold for the virus replication complex. This membrane alteration gives rise to the so-called ER-derived membranous web that contains the replication complex. NS4B self-interaction contributes to its function in membranous web formation. Promotes host TRIF protein degradation in a CASP8-dependent manner thereby inhibiting host TLR3-mediated interferon signaling. Disrupts the interaction between STING and TBK1 contributing to the inhibition of interferon signaling. In terms of biological role, phosphorylated protein that is indispensable for viral replication and assembly. Both hypo- and hyperphosphorylated states are required for the viral life cycle. The hyperphosphorylated form of NS5A is an inhibitor of viral replication. Involved in RNA-binding and especially in binding to the viral genome. Zinc is essential for RNA-binding. Participates in the viral particle production as a result of its interaction with the mature viral core protein. Its interaction with host VAPB may target the viral replication complex to vesicles. Down-regulates viral IRES translation initiation. Mediates interferon resistance, presumably by interacting with and inhibiting host EIF2AK2/PKR. Prevents BIN1-induced apoptosis. Acts as a transcriptional activator of some host genes important for viral replication when localized in the nucleus. Via the interaction with host PACSIN2, modulates lipid droplet formation in order to promote virion assembly. Modulates TNFRSF21/DR6 signaling pathway for viral propagation. Functionally, RNA-dependent RNA polymerase that performs primer-template recognition and RNA synthesis during viral replication. Initiates RNA transcription/replication at a flavin adenine dinucleotide (FAD), resulting in a 5'- FAD cap on viral RNAs. In this way, recognition of viral 5' RNA by host pattern recognition receptors can be bypassed, thereby evading activation of antiviral pathways. The chain is Genome polyprotein from Hepatitis C virus genotype 5a (isolate SA13) (HCV).